The following is a 187-amino-acid chain: DNA-directed RNA polymerase subunit Rpo7 (187 aa).

The S1 motif domain occupies 82-166 (YELIEGEVVD…RGSKIALTMR (85 aa)).

This sequence belongs to the eukaryotic RPB7/RPC8 RNA polymerase subunit family. In terms of assembly, part of the RNA polymerase complex. Forms a stalk with Rpo4 that extends from the main structure.

The protein resides in the cytoplasm. It carries out the reaction RNA(n) + a ribonucleoside 5'-triphosphate = RNA(n+1) + diphosphate. Functionally, DNA-dependent RNA polymerase (RNAP) catalyzes the transcription of DNA into RNA using the four ribonucleoside triphosphates as substrates. The chain is DNA-directed RNA polymerase subunit Rpo7 from Methanocaldococcus jannaschii (strain ATCC 43067 / DSM 2661 / JAL-1 / JCM 10045 / NBRC 100440) (Methanococcus jannaschii).